Reading from the N-terminus, the 67-residue chain is DNA-directed RNA polymerase subunit omega (67 aa).

It belongs to the RNA polymerase subunit omega family. In terms of assembly, the RNAP catalytic core consists of 2 alpha, 1 beta, 1 beta' and 1 omega subunit. When a sigma factor is associated with the core the holoenzyme is formed, which can initiate transcription.

It catalyses the reaction RNA(n) + a ribonucleoside 5'-triphosphate = RNA(n+1) + diphosphate. Functionally, promotes RNA polymerase assembly. Latches the N- and C-terminal regions of the beta' subunit thereby facilitating its interaction with the beta and alpha subunits. This Polynucleobacter asymbioticus (strain DSM 18221 / CIP 109841 / QLW-P1DMWA-1) (Polynucleobacter necessarius subsp. asymbioticus) protein is DNA-directed RNA polymerase subunit omega.